The primary structure comprises 136 residues: Early E3 15.3 kDa protein (136 aa).

Belongs to the adenoviridae E3_15 family.

In terms of biological role, protects virus-infected cells from TNF-induced cytolysis. This is Early E3 15.3 kDa protein from Human adenovirus B serotype 3 (HAdV-3).